We begin with the raw amino-acid sequence, 816 residues long: Phosphatidylinositol 4-kinase beta (816 aa).

3 disordered regions span residues 1–28 (MGDT…NGGS), 93–120 (PPTG…RRRR), and 249–318 (HRKR…SFSS). Glycine 2 bears the N-acetylglycine mark. An interaction with ACBD3 region spans residues 2-68 (GDTVVAPAPL…VKLSHGGVAS (67 aa)). In terms of domain architecture, PIK helical spans 49-242 (QKACQEVLQK…GTKLRRLILS (194 aa)). Serine 258 is modified (phosphoserine). Phosphothreonine is present on threonine 263. A phosphoserine mark is found at serine 266, serine 275, serine 277, serine 284, serine 294, serine 428, and serine 511. Positions 278–294 (DATASISLSSSLKRTAS) are enriched in low complexity. 2 positions are modified to phosphothreonine: threonine 517 and threonine 519. In terms of domain architecture, PI3K/PI4K catalytic spans 535–801 (EPWQEKVRRI…MVDGSMRSIT (267 aa)). The tract at residues 541–547 (VRRIREG) is G-loop. A catalytic loop region spans residues 668-676 (QVKDRHNGN). The segment at 687–711 (HIDFGFILSSSPRNLGFETSAFKLT) is activation loop.

It belongs to the PI3/PI4-kinase family. Type III PI4K subfamily. In terms of assembly, interacts with ARF1 and ARF3 in the Golgi complex, but not with ARF4, ARF5 or ARF6. Interacts with NCS1/FREQ in a calcium-independent manner. Interacts with CALN1/CABP8 and CALN2/CABP7; in a calcium-dependent manner; this interaction competes with NCS1/FREQ binding. Interacts with ACBD3. Interacts with ARMH3, YWHAB, YWHAE, YWHAG, YWHAH, YWHAQ, YWHAZ and SFN. Interacts with GGA2 (via VHS domain); the interaction is important for PI4KB location at the Golgi apparatus membrane. Interacts with ATG9A. It depends on Mg(2+) as a cofactor. Requires Mn(2+) as cofactor.

It is found in the endomembrane system. Its subcellular location is the mitochondrion outer membrane. The protein resides in the rough endoplasmic reticulum membrane. It localises to the golgi apparatus. The protein localises to the golgi apparatus membrane. The enzyme catalyses a 1,2-diacyl-sn-glycero-3-phospho-(1D-myo-inositol) + ATP = a 1,2-diacyl-sn-glycero-3-phospho-(1D-myo-inositol 4-phosphate) + ADP + H(+). Its activity is regulated as follows. Inhibited by wortmannin. Increased kinase activity upon interaction with NCS1/FREQ. Functionally, phosphorylates phosphatidylinositol (PI) in the first committed step in the production of the second messenger inositol-1,4,5,-trisphosphate (PIP). May regulate Golgi disintegration/reorganization during mitosis, possibly via its phosphorylation. Involved in Golgi-to-plasma membrane trafficking. May play an important role in the inner ear development. This Rhinolophus ferrumequinum (Greater horseshoe bat) protein is Phosphatidylinositol 4-kinase beta (PI4KB).